The primary structure comprises 276 residues: Radial spoke head protein 9 homolog (276 aa).

This sequence belongs to the flagellar radial spoke RSP9 family. In terms of assembly, component of the axonemal radial spoke 1 (RS1) and 2 (RS2) complexes, at least composed of spoke head proteins RSPH1, RSPH3, RSPH9 and the cilia-specific component RSPH4A or sperm-specific component RSPH6A, spoke stalk proteins RSPH14, DNAJB13, DYDC1, ROPN1L and NME5, and the RS1 complex-specific anchor protein IQUB. Interacts with IQUB. Interacts with RSPH3B. Interacts with RSPH4A. Interacts with RSPH6A. Interacts with CFAP61. Interacts with LRRC23.

Its subcellular location is the cytoplasm. The protein localises to the cytoskeleton. The protein resides in the cilium axoneme. It is found in the flagellum axoneme. It localises to the cell projection. Its subcellular location is the kinocilium. Its function is as follows. Functions as part of axonemal radial spoke complexes that play an important part in the motility of sperm and cilia. Essential for both the radial spoke head assembly and the central pair microtubule stability in ependymal motile cilia. Required for motility of olfactory and neural cilia and for the structural integrity of ciliary axonemes in both 9+0 and 9+2 motile cilia. The sequence is that of Radial spoke head protein 9 homolog (RSPH9) from Homo sapiens (Human).